Here is a 146-residue protein sequence, read N- to C-terminus: Interleukin-3 (146 aa).

A signal peptide spans 1–17 (MSSLSILHLLLLLLSLH). N65 carries N-linked (GlcNAc...) asparagine glycosylation.

This sequence belongs to the IL-3 family. Monomer. As to expression, activated T-cells, mast cells, natural killer cells.

The protein resides in the secreted. Its function is as follows. Granulocyte/macrophage colony-stimulating factors are cytokines that act in hematopoiesis by controlling the production, differentiation, and function of 2 related white cell populations of the blood, the granulocytes and the monocytes-macrophages. This CSF induces granulocytes, macrophages, mast cells, stem cells, erythroid cells, eosinophils and megakaryocytes. This is Interleukin-3 (IL3) from Ovis aries (Sheep).